We begin with the raw amino-acid sequence, 594 residues long: Actin-histidine N-methyltransferase (594 aa).

Residues 1–22 form a disordered region; it reads MGKKSRVKTQKSGTGATATVSP. Residues 10-20 are compositionally biased toward polar residues; that stretch reads QKSGTGATATV. S-adenosyl-L-methionine is bound by residues Arg75, 104–106, Arg254, 275–279, and 325–327; these read EGF, DMCNH, and SGF. The 221-residue stretch at 94–314 folds into the SET domain; that stretch reads EGFEMVNFKE…AGEQIYIFYG (221 aa). Phosphoserine is present on Ser513. Residues 549–594 form a disordered region; the sequence is ENGLVNGENSIPNGTRSENESLNQESKRAVEDAKGSSSDSTAGVKE. A compositionally biased stretch (polar residues) spans 555 to 572; the sequence is GENSIPNGTRSENESLNQ. Residues 573 to 582 are compositionally biased toward basic and acidic residues; sequence ESKRAVEDAK. A compositionally biased stretch (polar residues) spans 583 to 594; sequence GSSSDSTAGVKE.

It belongs to the class V-like SAM-binding methyltransferase superfamily. SETD3 actin-histidine methyltransferase family. As to quaternary structure, interacts with MYOD1. Post-translationally, phosphorylated by GSK3B, which is required for recognition by the SCF(FBXW7) complex and subsequent degradation. Ubiquitinated by the SCF(FBXW7) complex following phosphorylation by GSK3B, leading to its degradation by the proteasome.

The protein resides in the cytoplasm. It localises to the nucleus. The enzyme catalyses L-histidyl-[protein] + S-adenosyl-L-methionine = N(tele)-methyl-L-histidyl-[protein] + S-adenosyl-L-homocysteine + H(+). Its function is as follows. Protein-histidine N-methyltransferase that specifically mediates 3-methylhistidine (tele-methylhistidine) methylation of actin at 'His-73'. Histidine methylation of actin is required for smooth muscle contraction of the laboring uterus during delivery. Does not have protein-lysine N-methyltransferase activity and probably only catalyzes histidine methylation of actin. In Homo sapiens (Human), this protein is Actin-histidine N-methyltransferase.